A 433-amino-acid polypeptide reads, in one-letter code: Divergent protein kinase domain 2B (433 aa).

An N-terminal signal peptide occupies residues 1–29 (MEPRLGPKAAALHLGWPFLLLWVSGLSYS). Residue Asn-100 is glycosylated (N-linked (GlcNAc...) asparagine).

The protein belongs to the DIPK family.

The protein resides in the secreted. The protein is Divergent protein kinase domain 2B (DIPK2B) of Bos taurus (Bovine).